The following is a 103-amino-acid chain: Small ribosomal subunit protein uS10 (103 aa).

It belongs to the universal ribosomal protein uS10 family. In terms of assembly, part of the 30S ribosomal subunit.

Functionally, involved in the binding of tRNA to the ribosomes. This is Small ribosomal subunit protein uS10 from Dechloromonas aromatica (strain RCB).